Consider the following 91-residue polypeptide: Putative regulatory protein CLB_2388 (91 aa).

Belongs to the RemA family.

The chain is Putative regulatory protein CLB_2388 from Clostridium botulinum (strain ATCC 19397 / Type A).